Reading from the N-terminus, the 317-residue chain is GTPase Era (317 aa).

In terms of domain architecture, Era-type G spans 23 to 190; that stretch reads RSGFVALIGP…MDYLVETLPE (168 aa). The tract at residues 31 to 38 is G1; the sequence is GPTNAGKS. Residue 31-38 coordinates GTP; it reads GPTNAGKS. Residues 57-61 are G2; the sequence is QTTRA. The tract at residues 78–81 is G3; sequence DTPG. Residues 78-82 and 140-143 each bind GTP; these read DTPGI and NKID. The G4 stretch occupies residues 140-143; that stretch reads NKID. Residues 169 to 171 are G5; sequence ISA. The KH type-2 domain occupies 221–298; that stretch reads LHQELPYASH…HLFLFVKVRE (78 aa).

This sequence belongs to the TRAFAC class TrmE-Era-EngA-EngB-Septin-like GTPase superfamily. Era GTPase family. Monomer.

The protein resides in the cytoplasm. The protein localises to the cell inner membrane. An essential GTPase that binds both GDP and GTP, with rapid nucleotide exchange. Plays a role in 16S rRNA processing and 30S ribosomal subunit biogenesis and possibly also in cell cycle regulation and energy metabolism. The sequence is that of GTPase Era from Agrobacterium fabrum (strain C58 / ATCC 33970) (Agrobacterium tumefaciens (strain C58)).